The sequence spans 267 residues: Proteasome subunit alpha (267 aa).

The segment at E231–D267 is disordered. 2 stretches are compositionally biased toward basic and acidic residues: residues L234–A243 and E252–D267.

It belongs to the peptidase T1A family. As to quaternary structure, the 20S proteasome core is composed of 14 alpha and 14 beta subunits that assemble into four stacked heptameric rings, resulting in a barrel-shaped structure. The two inner rings, each composed of seven catalytic beta subunits, are sandwiched by two outer rings, each composed of seven alpha subunits. The catalytic chamber with the active sites is on the inside of the barrel. Has a gated structure, the ends of the cylinder being occluded by the N-termini of the alpha-subunits. Is capped by the proteasome-associated ATPase, ARC.

Its subcellular location is the cytoplasm. The protein operates within protein degradation; proteasomal Pup-dependent pathway. The formation of the proteasomal ATPase ARC-20S proteasome complex, likely via the docking of the C-termini of ARC into the intersubunit pockets in the alpha-rings, may trigger opening of the gate for substrate entry. Interconversion between the open-gate and close-gate conformations leads to a dynamic regulation of the 20S proteasome proteolysis activity. Component of the proteasome core, a large protease complex with broad specificity involved in protein degradation. The polypeptide is Proteasome subunit alpha (Mycobacterium ulcerans (strain Agy99)).